The sequence spans 568 residues: O-fucosyltransferase 9 (568 aa).

Low complexity predominate over residues 1-19; the sequence is MHGLSRLGNGSSNGRINIP. The tract at residues 1–33 is disordered; that stretch reads MHGLSRLGNGSSNGRINIPSPSPPSSPRIRHTR. Residues 65 to 85 traverse the membrane as a helical; Signal-anchor for type II membrane protein segment; that stretch reads LLLAPLLYIAGMLLFMGSFGF. Residues asparagine 125, asparagine 151, asparagine 189, and asparagine 243 are each glycosylated (N-linked (GlcNAc...) asparagine). 336 to 338 is a substrate binding site; that stretch reads HLR. N-linked (GlcNAc...) asparagine glycans are attached at residues asparagine 408 and asparagine 409.

Belongs to the glycosyltransferase GT106 family.

Its subcellular location is the membrane. The protein operates within glycan metabolism. In Arabidopsis thaliana (Mouse-ear cress), this protein is O-fucosyltransferase 9.